The following is a 215-amino-acid chain: Outer-membrane lipoprotein LolB (215 aa).

A signal peptide spans 1 to 19; that stretch reads MSKLRKITSLIFLTIIMVG. C20 carries N-palmitoyl cysteine lipidation. Residue C20 is the site of S-diacylglycerol cysteine attachment.

Belongs to the LolB family. Monomer.

The protein localises to the cell outer membrane. In terms of biological role, plays a critical role in the incorporation of lipoproteins in the outer membrane after they are released by the LolA protein. The protein is Outer-membrane lipoprotein LolB of Vibrio atlanticus (strain LGP32) (Vibrio splendidus (strain Mel32)).